Reading from the N-terminus, the 208-residue chain is Redox-sensing transcriptional repressor Rex (208 aa).

Positions isoleucine 18–isoleucine 57 form a DNA-binding region, H-T-H motif. Glycine 92 to glycine 97 lines the NAD(+) pocket.

The protein belongs to the transcriptional regulatory Rex family. Homodimer.

The protein resides in the cytoplasm. Modulates transcription in response to changes in cellular NADH/NAD(+) redox state. The chain is Redox-sensing transcriptional repressor Rex from Latilactobacillus sakei subsp. sakei (strain 23K) (Lactobacillus sakei subsp. sakei).